Reading from the N-terminus, the 811-residue chain is Potassium transporter 7 (811 aa).

The Cytoplasmic portion of the chain corresponds to 1–52 (MPSYQYLLSLLFYILDCTDRFSVIVTIHNHRVGVLMIVLLQDQWKSYCRTIS). A helical transmembrane segment spans residues 53–73 (LLAFQSFGVVYGDLSTSPLYV). The Extracellular segment spans residues 74–93 (YKSAFSGRLNNYRDETTIFG). The chain crosses the membrane as a helical span at residues 94–114 (LFSLIFWTLTLLPLLKYVIIV). The Cytoplasmic portion of the chain corresponds to 115 to 181 (LNADDNGEGG…EKHRKLRTCL (67 aa)). Residues 182 to 202 (LLFVLFGACMVIGDGVFTPAI) traverse the membrane as a helical segment. Residues 203–217 (SVLSAISGLKDPGPG) are Extracellular-facing. A helical membrane pass occupies residues 218 to 238 (GIPDGWVVFIACIVLVGLFAL). The Cytoplasmic segment spans residues 239 to 245 (QHRGTHR). Residues 246 to 266 (VAFMFAPIVVVWLLSIGVIGL) form a helical membrane-spanning segment. At 267 to 296 (YNIIHWNHRIFLALSPHYVIKFFKMTGKDG) the chain is on the extracellular side. The chain crosses the membrane as a helical span at residues 297-317 (WLSLGGVLLAITGTEAMFADL). Over 318-326 (GHFTAASIR) the chain is Cytoplasmic. A helical membrane pass occupies residues 327–347 (LAFVGAIYPCLVLQYMGQAAF). Residues 348–366 (LSRNMSAVEDSFYQSVPRS) are Extracellular-facing. An N-linked (GlcNAc...) asparagine glycan is attached at Asn351. The helical transmembrane segment at 367–387 (LFWPVFVIATLAAVVGSQSII) threads the bilayer. The Cytoplasmic portion of the chain corresponds to 388–418 (SATFSIVKQCLSLGCFPRVKVVHTSRWIHGQ). Residues 419-439 (IYIPEINWILMVLCLAVTLGF) traverse the membrane as a helical segment. At 440–450 (RDTTVIGNAYG) the chain is on the extracellular side. The helical transmembrane segment at 451-471 (LACIVVMFVTTWLMALVIIFV) threads the bilayer. The Cytoplasmic segment spans residues 472–475 (WQKN). The helical transmembrane segment at 476–496 (ILLALLFVVAFGSIEVVYLSA) threads the bilayer. Residues 497–503 (AVTKVPQ) lie on the Extracellular side of the membrane. Residues 504 to 524 (GGWAPIVFAFVFMLVMYVWHY) traverse the membrane as a helical segment. Over 525 to 811 (GSRRKYLFDL…LVEVGMIYYV (287 aa)) the chain is Cytoplasmic. The interval 680 to 702 (TGLVMRDSNNEASGTSLTRSSRS) is disordered.

The protein belongs to the HAK/KUP transporter (TC 2.A.72.3) family. In terms of tissue distribution, expressed in roots and shoots.

The protein resides in the membrane. Functionally, high-affinity potassium transporter. The chain is Potassium transporter 7 (HAK7) from Oryza sativa subsp. japonica (Rice).